Consider the following 544-residue polypeptide: Phosphoenolpyruvate carboxykinase (ATP) (544 aa).

246–253 (GLSGTGKT) contacts ATP.

It belongs to the phosphoenolpyruvate carboxykinase (ATP) family.

The catalysed reaction is oxaloacetate + ATP = phosphoenolpyruvate + ADP + CO2. Its pathway is carbohydrate biosynthesis; gluconeogenesis. This is Phosphoenolpyruvate carboxykinase (ATP) (PCK1) from Candida glabrata (strain ATCC 2001 / BCRC 20586 / JCM 3761 / NBRC 0622 / NRRL Y-65 / CBS 138) (Yeast).